Here is a 244-residue protein sequence, read N- to C-terminus: Heat stress transcription factor B-3 (244 aa).

Residues 38–132 (PPPFLVKTYK…LMSNIRRRKS (95 aa)) mediate DNA binding. The interval 173–218 (TSSSFVYTALLDENKCLKNENELLSCELGKTKKKCKQLMELVERYR) is hydrophobic repeat HR-A/B. The short motif at 202-208 (KTKKKCK) is the Nuclear localization signal element. A disordered region spans residues 216 to 244 (RYRGEDEDATDESDDEEDEGLKLFGVKLE). Acidic residues predominate over residues 220-234 (EDEDATDESDDEEDE). Residues 236–243 (LKLFGVKL) carry the Nuclear export signal motif.

Belongs to the HSF family. Class B subfamily. In terms of assembly, homotrimer. Exhibits temperature-dependent phosphorylation.

Its subcellular location is the cytoplasm. The protein localises to the nucleus. In terms of biological role, transcriptional regulator that specifically binds DNA sequence 5'-AGAAnnTTCT-3' known as heat shock promoter elements (HSE). This chain is Heat stress transcription factor B-3 (HSFB3), found in Arabidopsis thaliana (Mouse-ear cress).